The sequence spans 620 residues: Origin recognition complex subunit 2 (620 aa).

The disordered stretch occupies residues 1–184; sequence MLNGEDFVEH…PSKKSLTTNH (184 aa). The segment covering 13 to 23 has biased composition (polar residues); it reads ILSSPAKSRNV. A compositionally biased stretch (basic and acidic residues) spans 26–36; the sequence is KRVDPHGERQL. Thr-60 bears the Phosphothreonine mark. Residues 83 to 101 are compositionally biased toward basic and acidic residues; it reads KIQEELTDRIKKDEKDTIS. A compositionally biased stretch (polar residues) spans 113–127; it reads SGNVNEESKTSNNKQ. Residues 128 to 143 show a composition bias toward basic and acidic residues; sequence VMEKTGIKEKREREKI. Residues 145-166 show a composition bias toward polar residues; that stretch reads VATTTYEDNVTPQTDDNFVSNS. A Phosphothreonine modification is found at Thr-187. Phosphoserine is present on Ser-188. Over residues 204-218 the composition is skewed to polar residues; the sequence is STSPGKLTLSRNFTP. The tract at residues 204 to 225 is disordered; the sequence is STSPGKLTLSRNFTPTPVPKNK.

This sequence belongs to the ORC2 family. Component of the origin recognition complex (ORC) composed of at least ORC1, ORC2, ORC3, ORC4, ORC5 and ORC6. Interacts with MCM10 and TAH11.

Its subcellular location is the nucleus. Its function is as follows. Component of the origin recognition complex (ORC) that binds origins of replication. It has a role in both chromosomal replication and mating type transcriptional silencing. Binds to the ARS consensus sequence (ACS) of origins of replication. This is Origin recognition complex subunit 2 (ORC2) from Saccharomyces cerevisiae (strain ATCC 204508 / S288c) (Baker's yeast).